The chain runs to 612 residues: Cryptochrome-2 (612 aa).

The interval 1-485 (MKMDKKTIVW…TARELLAKAI (485 aa)) is CNT2, binds chromophores to sense blue light and mediate CRY dimerization. In terms of domain architecture, Photolyase/cryptochrome alpha/beta spans 5 to 134 (KKTIVWFRRD…SVQSYNGDLL (130 aa)). Position 232 (tyrosine 232) interacts with FAD. Asparagine 235 and serine 243 together coordinate Mg(2+). 244–248 (TSLLS) serves as a coordination point for FAD. Residue histidine 355 participates in Mg(2+) binding. Residues asparagine 356 and 387–389 (DAD) each bind FAD. ATP is bound at residue 356–357 (NR). Position 406 (aspartate 406) interacts with ATP. Residues 486-612 (SRTREAQIMI…TTSLGKNGCK (127 aa)) form a CCT2/CCE2, mediates blue light signaling region. The interval 539-576 (GSKRVKPEEEEERDMKKSRGFDERELFSTAESSSSSSV) is disordered. The short motif at 541 to 555 (KRVKPEEEEERDMKK) is the Nuclear localization signal element. The span at 551-564 (RDMKKSRGFDEREL) shows a compositional bias: basic and acidic residues. A Phosphoserine; by CK1 modification is found at serine 587. Positions 590 to 612 (KNLEGIQDSSDQITTSLGKNGCK) are disordered. A compositionally biased stretch (polar residues) spans 596-612 (QDSSDQITTSLGKNGCK). Serine 598 and serine 599 each carry phosphoserine. At threonine 603 the chain carries Phosphothreonine; by CK1. A Phosphoserine modification is found at serine 605.

It belongs to the DNA photolyase class-1 family. Homodimer. Blue-light dependent dimerization. Interacts with COP1 and PHYB in the nucleus. Binds reversibly to CIBs proteins such as BHLH63/CIB1, BHLH78/CIB2, BHLH74/CIB4 and BHLH76/CIB5 after blue light illumination to stimulate their transcription factor activities. Interacts with PIF4 and PIF5 in the nucleus in response to low blue light (LBL). Binds to SPA1 in response to blue light, this interaction prevents SPA1/COP1 complex formation but stimulates interaction with COP1, and thus avoid COP1-dependent degradation of the transcription factors CO and HY5 by the proteasome and promotes hypocotyl elongation and floral initiation. Binding to ATP mediates conformational changes which facilitate flavin binding. Interacts with BIC1 in both darkness and light. Interacts with NRP. FAD is required as a cofactor. It depends on (6R)-5,10-methylene-5,6,7,8-tetrahydrofolate as a cofactor. Post-translationally, phosphorylated by CK1.3 and CK1.4; in response to blue light. Required for degradation. Adopts an open conformation when phosphorylated upon photoexcitation and thus interacts with signaling partner proteins. Not autophosphorylated, even in complex with FAD cofactor. In terms of processing, ubiquitinated; in response to blue light. In terms of tissue distribution, mostly expressed in the shoot meristems and root tips, and, to a lower extent, in the cotyledons, hypocotyls, and roots.

It localises to the nucleus. The protein localises to the PML body. It is found in the cytoplasm. Functionally, photoreceptor that mediates primarily blue light inhibition of hypocotyl elongation and photoperiodic control of floral initiation, and regulates other light responses, including circadian rhythms, tropic growth, stomata opening, guard cell development, root development, bacterial and viral pathogen responses, abiotic stress responses, cell cycles, programmed cell death, apical dominance, fruit and ovule development, seed dormancy, and magnetoreception. Photoexcited cryptochromes interact with signaling partner proteins to alter gene expression at both transcriptional and post-translational levels and, consequently, regulate the corresponding metabolic and developmental programs. Blue-light absorbing flavoprotein that activates reversible flavin photoreduction via an electron transport chain comprising a tryptophan triad (W-321, W-374 and W-397), or via an alternative electron transport that involves small metabolites, including NADPH, NADH, and ATP. The half-life of the activated signaling state is about 16 minutes. Perceives low blue light (LBL) and responds by directly contacting two bHLH transcription factors, PIF4 and PIF5, at chromatin on E-box variant 5'-CA[CT]GTG-3' to promote their activity and stimulate specific gene expression to adapt global physiology (e.g. hypocotyl elongation and hyponastic growth in low blue light). In response to blue light, binds to CIB proteins (e.g. BHLH63/CIB1 and BHLH76/CIB5) to activate transcription and floral initiation. Mediates blue light-induced gene expression, floral initiation and hypocotyl elongation through the interaction with SPA1 that prevents formation of SPA1/COP1 complex but stimulates COP1 binding, and thus inhibits COP1-mediated degradation of transcription factors (e.g. CO and HY5). Promotes flowering time in continuous light (LL). Involved in shortening the circadian clock period, especially at 27 degrees Celsius, in blue light (BL). Required to maintain clock genes expression rhythm. Triggers nuclear accumulation of ROS in response to blue light illumination. Involved in blue light-dependent stomatal opening, transpiration and inhibition of stem and root growth, probably by regulating abscisic acid (ABA). Regulates the timing of flowering by promoting the expression of 'FLOWERING LOCUS T' (FT) in vascular bundles. Negatively regulated by 'FLOWERING LOCUS C' (FLC). General positive regulator of reversible low light-induced chromatin decompaction. Involved in triggering chromatin decondensation during floral transition. Together with phototropins, involved in phototropism regulation by various blue light fluence; blue light attenuates phototropism in high fluence rates (100 umol.m-2.s-1) but enhances phototropism in low fluence rates (&lt;1.0 umol.m-2.s-1). The effect of near-null magnetic field on flowering is altered by changes of blue light cycle and intensity in a CRY1/CRY2-dependent manner. Involved in the strigolactone signaling that regulates hypocotyl growth in response to blue light. In terms of biological role, confers resistance to turnip crinkle virus (TCV) by preventing COP1-mediated proteasome-mediated degradation of RPP8/HRT, thus promoting its stability in light. Exposure to darkness or blue-light induces degradation of CRY2, and in turn of RPP8/HRT, resulting in susceptibility to TCV. The chain is Cryptochrome-2 from Arabidopsis thaliana (Mouse-ear cress).